Here is a 409-residue protein sequence, read N- to C-terminus: MEEGSSGGSGSSDSNAGGSGGVQQRELERMAEVLVTGEQLRLRLHEEKVIKDRRHHLKTYPNCFVAKELIDWLIEHKEASDRETAIKLMQKLADRGIIHHVCDEHKEFKDVKLFYRFRKDDGTFALDSEVKAFMRGQRLYEKLMSPETTLLQPREEEGVKYERTFMASEFLDWLVQEGEATTRKEAEQLCHRLMDHGIIQHVSNKHPFVDSNLLYQFRMNFRRRRRLMELLNETSPSSQETHDSPFCLRKQSHDSRKSTSFMSVSPSKEIKIVSAVRRSSMSSCGSSGYFSSSPTLSSSPPVLCNPKSVLKRPVTSEELLTPGAPYARKTFTIVGDAVGWGFVVRGSKPCHIQAVDPSGPAAAAGMKVCQFVVSVNGLNVLNVDYRTVSNLILTGPRTIVMEVMEELDC.

M1 is modified (N-acetylmethionine). Residues 1–10 are compositionally biased toward gly residues; that stretch reads MEEGSSGGSG. The segment at 1–23 is disordered; sequence MEEGSSGGSGSSDSNAGGSGGVQ. 2 consecutive DEP domains span residues 36-119 and 146-219; these read TGEQ…RFRK and PETT…QFRM. Residues 217–235 carry the DDEX motif motif; that stretch reads FRMNFRRRRRLMELLNETS. At S235 the chain carries Phosphoserine. A Phosphothreonine modification is found at T241. Residues S244 and S258 each carry the phosphoserine modification. T259 carries the phosphothreonine modification. Phosphoserine occurs at positions 263, 265, 280, 282, 283, 286, and 287. The BetaTrCP degron motif signature appears at 286-291; that stretch reads SSGYFS. Y289 is subject to Phosphotyrosine. Phosphoserine is present on residues S291 and S293. A Phosphothreonine modification is found at T295. Residues S297, S298, and S299 each carry the phosphoserine modification. A PDZ domain is found at 330-407; that stretch reads TFTIVGDAVG…TIVMEVMEEL (78 aa).

As to quaternary structure, associated component of the mechanistic target of rapamycin complex 1 (mTORC1) which contains MTOR, MLST8 and RPTOR. Associated component of the mechanistic target of rapamycin complex 2 (mTORC2) which contains MTOR, MLST8, PROTOR1, RICTOR, MAPKAP1 and DEPTOR. Interacts (via PDZ domain) with MTOR; interacts with MTOR within both mTORC1 and mTORC2. Interacts (via PDZ domain) with MINAR1 (via N-terminus). Interacts with SIK3. In terms of processing, phosphorylation weakens interaction with MTOR within mTORC1 and mTORC2. Phosphorylated at Ser-286, Ser-287 and Ser-291 in response to mitogenic stimulation by MTOR: DEPTOR is either directly phosphorylated by MTOR or indirectly via proteins kinases that are activated by MTOR, such as CK1/CSNK1A1. Phosphorylation at Ser-286, Ser-287 and Ser-291 promotes ubiquitination by the SCF(BTRC) complex, followed by degradation. Phosphorylation at Ser-235 by MAPK3/ERK1 promotes deubiquitination by USP7, enhancing its stability. Phosphorylation at Tyr-291 by SYK impairs its interaction with MTOR, promoting mTORC1 and mTORC2 signaling. Ubiquitinated; leading to proteasomal degradation. Ubiquitination by the SCF(BTRC) and SCF(FBXW11) complexes following phosphorylation at Ser-286, Ser-287 and Ser-291 by MTOR, leads to its degradation by the proteasome. Deubiquitinated by OTUB1 in response to amino acid via a non-canonical mechanism, leading to DEPTOR stability. Deubiquitinated by USP7 following phosphorylation at Ser-235, promoting its stability.

The protein localises to the lysosome membrane. With respect to regulation, inhibited upon phosphatidic acid-binding: phosphatidic acid produced upon mitogenic stimulation promotes DEPTOR dissociatiom from the mTORC1 and mTORC2 complexes, leading to their activation. Specifically binds unsaturated phosphatidic acid, such as 16:0-18:1, 18:0-18:1 and di-18:1. Inhibited when nutrients are present via a feedback loop: phosphorylation by MTOR promotes DEPTOR ubiquitination and degradation. Its function is as follows. Negative regulator of the mTORC1 and mTORC2 complexes: inhibits the protein kinase activity of MTOR, thereby inactivating both complexes. DEPTOR inhibits mTORC1 and mTORC2 to induce autophagy. In contrast to AKT1S1/PRAS40, only partially inhibits mTORC1 activity. The protein is DEP domain-containing mTOR-interacting protein of Mus musculus (Mouse).